The following is a 408-amino-acid chain: 4-hydroxy-3-methylbut-2-en-1-yl diphosphate synthase (ferredoxin) (408 aa).

The span at 1 to 21 (MQTLPTPTTSSNTANQSTFDT) shows a compositional bias: polar residues. Residues 1-26 (MQTLPTPTTSSNTANQSTFDTTIKRR) form a disordered region. The [4Fe-4S] cluster site is built by Cys317, Cys320, Cys351, and Glu358.

It belongs to the IspG family. It depends on [4Fe-4S] cluster as a cofactor.

It carries out the reaction (2E)-4-hydroxy-3-methylbut-2-enyl diphosphate + 2 oxidized [2Fe-2S]-[ferredoxin] + H2O = 2-C-methyl-D-erythritol 2,4-cyclic diphosphate + 2 reduced [2Fe-2S]-[ferredoxin] + H(+). It participates in isoprenoid biosynthesis; isopentenyl diphosphate biosynthesis via DXP pathway; isopentenyl diphosphate from 1-deoxy-D-xylulose 5-phosphate: step 5/6. In terms of biological role, converts 2C-methyl-D-erythritol 2,4-cyclodiphosphate (ME-2,4cPP) into 1-hydroxy-2-methyl-2-(E)-butenyl 4-diphosphate. The polypeptide is 4-hydroxy-3-methylbut-2-en-1-yl diphosphate synthase (ferredoxin) (Trichormus variabilis (strain ATCC 29413 / PCC 7937) (Anabaena variabilis)).